The chain runs to 235 residues: Hydroxyacylglutathione hydrolase (235 aa).

The Zn(2+) site is built by His-53, His-55, Asp-57, His-58, His-109, Asp-127, and His-165.

Belongs to the metallo-beta-lactamase superfamily. Glyoxalase II family. Monomer. Requires Zn(2+) as cofactor.

The catalysed reaction is an S-(2-hydroxyacyl)glutathione + H2O = a 2-hydroxy carboxylate + glutathione + H(+). It functions in the pathway secondary metabolite metabolism; methylglyoxal degradation; (R)-lactate from methylglyoxal: step 2/2. Functionally, thiolesterase that catalyzes the hydrolysis of S-D-lactoyl-glutathione to form glutathione and D-lactic acid. The protein is Hydroxyacylglutathione hydrolase of Haemophilus ducreyi (strain 35000HP / ATCC 700724).